Here is a 344-residue protein sequence, read N- to C-terminus: 4'-phosphopantetheinyl transferase NpgA (344 aa).

Belongs to the P-Pant transferase superfamily.

It carries out the reaction apo-[ACP] + CoA = holo-[ACP] + adenosine 3',5'-bisphosphate + H(+). In terms of biological role, transfers the 4'-phosphopantetheine moiety from coenzyme A to a Ser of an acyl-carrier-protein. The enzyme is able to transfer the cofactor to a broad range of enzymes with acyl- or peptidyl-carrier protein domains. Required for primary biological processes such as growth and asexual/sexual development, and activates target enzymes involved in the synthesis of metabolites such as fatty acids, polyketides and nonribosomal peptides, lysine, siderophore, penicillin, sterigmatocystin, shamixantone, dehydroaustinol, and pigments. The sequence is that of 4'-phosphopantetheinyl transferase NpgA (npgA) from Emericella nidulans (strain FGSC A4 / ATCC 38163 / CBS 112.46 / NRRL 194 / M139) (Aspergillus nidulans).